A 313-amino-acid polypeptide reads, in one-letter code: Ribosomal RNA small subunit methyltransferase H (313 aa).

Residues 35-37, D55, F79, D101, and Q108 each bind S-adenosyl-L-methionine; that span reads GGH.

Belongs to the methyltransferase superfamily. RsmH family.

Its subcellular location is the cytoplasm. The catalysed reaction is cytidine(1402) in 16S rRNA + S-adenosyl-L-methionine = N(4)-methylcytidine(1402) in 16S rRNA + S-adenosyl-L-homocysteine + H(+). Specifically methylates the N4 position of cytidine in position 1402 (C1402) of 16S rRNA. This is Ribosomal RNA small subunit methyltransferase H from Salmonella agona (strain SL483).